The following is a 471-amino-acid chain: GTPase Der (471 aa).

EngA-type G domains are found at residues 3 to 166 (PTLA…EPEA) and 177 to 350 (IKLA…SSAT). GTP contacts are provided by residues 9–16 (GRPNVGKS), 56–60 (DTGGI), 118–121 (NKVD), 183–190 (GRPNVGKS), 230–234 (DTAGV), and 295–298 (NKWD). The 85-residue stretch at 351–435 (EKLNTNFLTK…PIRFEFKSSE (85 aa)) folds into the KH-like domain. The segment at 432–471 (KSSENPFAGRKNAMSKKPEHPSRRANSGGKSINRRPRPKS) is disordered.

Belongs to the TRAFAC class TrmE-Era-EngA-EngB-Septin-like GTPase superfamily. EngA (Der) GTPase family. As to quaternary structure, associates with the 50S ribosomal subunit.

Its function is as follows. GTPase that plays an essential role in the late steps of ribosome biogenesis. This Saccharophagus degradans (strain 2-40 / ATCC 43961 / DSM 17024) protein is GTPase Der.